The primary structure comprises 356 residues: sn-glycerol-3-phosphate import ATP-binding protein UgpC (356 aa).

The ABC transporter domain maps to 4-235; sequence LKLQAVTKSW…PASRFVASFI (232 aa). An ATP-binding site is contributed by 37–44; the sequence is GPSGCGKS.

The protein belongs to the ABC transporter superfamily. sn-glycerol-3-phosphate importer (TC 3.A.1.1.3) family. As to quaternary structure, the complex is composed of two ATP-binding proteins (UgpC), two transmembrane proteins (UgpA and UgpE) and a solute-binding protein (UgpB).

It is found in the cell inner membrane. It catalyses the reaction sn-glycerol 3-phosphate(out) + ATP + H2O = sn-glycerol 3-phosphate(in) + ADP + phosphate + H(+). Its function is as follows. Part of the ABC transporter complex UgpBAEC involved in sn-glycerol-3-phosphate (G3P) import. Responsible for energy coupling to the transport system. This chain is sn-glycerol-3-phosphate import ATP-binding protein UgpC, found in Salmonella typhi.